Consider the following 658-residue polypeptide: Threonine--tRNA ligase (658 aa).

Residues 1–61 (MSDVRVIIQR…KDGETVEAVE (61 aa)) form the TGS domain. Residues 259–554 (DHRKLGSELD…LLEHYAGAMP (296 aa)) form a catalytic region. Zn(2+) contacts are provided by cysteine 353, histidine 404, and histidine 531.

The protein belongs to the class-II aminoacyl-tRNA synthetase family. Homodimer. The cofactor is Zn(2+).

Its subcellular location is the cytoplasm. The enzyme catalyses tRNA(Thr) + L-threonine + ATP = L-threonyl-tRNA(Thr) + AMP + diphosphate + H(+). Catalyzes the attachment of threonine to tRNA(Thr) in a two-step reaction: L-threonine is first activated by ATP to form Thr-AMP and then transferred to the acceptor end of tRNA(Thr). Also edits incorrectly charged L-seryl-tRNA(Thr). The sequence is that of Threonine--tRNA ligase from Streptomyces coelicolor (strain ATCC BAA-471 / A3(2) / M145).